Consider the following 93-residue polypeptide: Alpha-defensin 10 (93 aa).

Positions 1–19 (MKTLVLLSALVLLAFQVQA) are cleaved as a signal peptide. The propeptide occupies 20–58 (DPIQNTDEETKTEEQPGEDDQAVSVSFGDPEGSSLQEES). A disordered region spans residues 22-56 (IQNTDEETKTEEQPGEDDQAVSVSFGDPEGSSLQE). Disulfide bonds link Cys64–Cys92, Cys66–Cys81, and Cys71–Cys91.

This sequence belongs to the alpha-defensin family. As to expression, paneth cells of the small bowel.

It is found in the secreted. Functionally, probably contributes to the antimicrobial barrier function of the small bowel mucosa. This is Alpha-defensin 10 (Defa10) from Mus musculus (Mouse).